The sequence spans 304 residues: Glucose-6-phosphate isomerase (304 aa).

Catalysis depends on Glu146, which acts as the Proton donor. Residue His177 is part of the active site.

This sequence belongs to the GPI family.

It localises to the cytoplasm. The enzyme catalyses alpha-D-glucose 6-phosphate = beta-D-fructose 6-phosphate. The protein operates within carbohydrate degradation; glycolysis; D-glyceraldehyde 3-phosphate and glycerone phosphate from D-glucose: step 2/4. The protein is Glucose-6-phosphate isomerase (PGI) of Calanus finmarchicus (Calanus tonsus).